Here is a 95-residue protein sequence, read N- to C-terminus: Ribonuclease kappa-B (95 aa).

2 helical membrane passes run 12-32 (GLIISVWGIIQLVLMGLFFYI) and 68-88 (CWIAACIYVLTLLLSAQQFYV).

This sequence belongs to the RNase K family.

It localises to the membrane. Inhibited by Zn(2+) and Hg(2+), while it is unaffected by Ca(2+). In terms of biological role, endoribonuclease which displays activity against poly(C) and poly(U) synthetic substrates, as well as rRNA. This is Ribonuclease kappa-B from Ceratitis capitata (Mediterranean fruit fly).